The sequence spans 343 residues: Dihydroorotase (343 aa).

Positions 14 and 16 each coordinate Zn(2+). Substrate-binding positions include 16-18 (HLR) and Asn-42. Zn(2+) is bound by residues Lys-100, His-137, and His-175. Lys-100 is modified (N6-carboxylysine). His-137 contacts substrate. Leu-220 contributes to the substrate binding site. Asp-248 lines the Zn(2+) pocket. Residue Asp-248 is part of the active site. Residues His-252 and Ala-264 each contribute to the substrate site.

This sequence belongs to the metallo-dependent hydrolases superfamily. DHOase family. Class II DHOase subfamily. Homodimer. Requires Zn(2+) as cofactor.

The catalysed reaction is (S)-dihydroorotate + H2O = N-carbamoyl-L-aspartate + H(+). It functions in the pathway pyrimidine metabolism; UMP biosynthesis via de novo pathway; (S)-dihydroorotate from bicarbonate: step 3/3. Catalyzes the reversible cyclization of carbamoyl aspartate to dihydroorotate. In Parasynechococcus marenigrum (strain WH8102), this protein is Dihydroorotase.